The sequence spans 332 residues: L-lactate dehydrogenase A chain (332 aa).

NAD(+) contacts are provided by residues 29–57 and arginine 99; that span reads GMVGMASAVSILLKDLCDELALVDVMEDK. Positions 106, 138, and 169 each coordinate substrate. Asparagine 138 is a binding site for NAD(+). The Proton acceptor role is filled by histidine 193. Threonine 248 provides a ligand contact to substrate.

Belongs to the LDH/MDH superfamily. LDH family. As to quaternary structure, homotetramer.

It is found in the cytoplasm. The enzyme catalyses (S)-lactate + NAD(+) = pyruvate + NADH + H(+). It participates in fermentation; pyruvate fermentation to lactate; (S)-lactate from pyruvate: step 1/1. In terms of biological role, interconverts simultaneously and stereospecifically pyruvate and lactate with concomitant interconversion of NADH and NAD(+). This chain is L-lactate dehydrogenase A chain (ldha), found in Sphyraena argentea (Pacific barracuda).